The chain runs to 365 residues: Peptide chain release factor 2 (365 aa).

Glutamine 252 carries the N5-methylglutamine modification.

It belongs to the prokaryotic/mitochondrial release factor family. Methylated by PrmC. Methylation increases the termination efficiency of RF2.

It localises to the cytoplasm. Its function is as follows. Peptide chain release factor 2 directs the termination of translation in response to the peptide chain termination codons UGA and UAA. The polypeptide is Peptide chain release factor 2 (Yersinia pseudotuberculosis serotype O:1b (strain IP 31758)).